The following is a 108-amino-acid chain: Succinate dehydrogenase assembly factor 4, mitochondrial (108 aa).

The N-terminal 20 residues, 1–20, are a transit peptide targeting the mitochondrion; that stretch reads MTPSRLPWLLSWVSATAWRA. The interval 31 to 108 is disordered; that stretch reads RKTSSSQGGK…WERKGRCIDF (78 aa). Composition is skewed to basic and acidic residues over residues 52-87 and 95-108; these read KLPE…EKGG and RYGD…CIDF.

It belongs to the SDHAF4 family. In terms of assembly, interacts with SDHA in its FAD-bound form.

The protein resides in the mitochondrion matrix. In terms of biological role, plays an essential role in the assembly of succinate dehydrogenase (SDH), an enzyme complex (also referred to as respiratory complex II) that is a component of both the tricarboxylic acid (TCA) cycle and the mitochondrial electron transport chain, and which couples the oxidation of succinate to fumarate with the reduction of ubiquinone (coenzyme Q) to ubiquinol. Binds to the flavoprotein subunit SDHA in its FAD-bound form, blocking the generation of excess reactive oxygen species (ROS) and facilitating its assembly with the iron-sulfur protein subunit SDHB into the SDH catalytic dimer. The chain is Succinate dehydrogenase assembly factor 4, mitochondrial from Homo sapiens (Human).